Here is a 227-residue protein sequence, read N- to C-terminus: Phosphoglycolate phosphatase (227 aa).

D11 (nucleophile) is an active-site residue. The Mg(2+) site is built by D11 and D13. Residue K155 participates in substrate binding. Residues D178 and D182 each coordinate Mg(2+).

Belongs to the archaeal SPP-like hydrolase family. It depends on Mg(2+) as a cofactor.

The enzyme catalyses 2-phosphoglycolate + H2O = glycolate + phosphate. Functionally, catalyzes the dephosphorylation of 2-phosphoglycolate. The sequence is that of Phosphoglycolate phosphatase from Haloarcula marismortui (strain ATCC 43049 / DSM 3752 / JCM 8966 / VKM B-1809) (Halobacterium marismortui).